Reading from the N-terminus, the 352-residue chain is Uroporphyrinogen decarboxylase (352 aa).

Substrate-binding positions include 27–31 (RQAGR), Asp77, Tyr154, Thr209, and His325.

The protein belongs to the uroporphyrinogen decarboxylase family. As to quaternary structure, homodimer.

The protein localises to the cytoplasm. It catalyses the reaction uroporphyrinogen III + 4 H(+) = coproporphyrinogen III + 4 CO2. Its pathway is porphyrin-containing compound metabolism; protoporphyrin-IX biosynthesis; coproporphyrinogen-III from 5-aminolevulinate: step 4/4. Catalyzes the decarboxylation of four acetate groups of uroporphyrinogen-III to yield coproporphyrinogen-III. This Legionella pneumophila (strain Paris) protein is Uroporphyrinogen decarboxylase.